The chain runs to 150 residues: Large ribosomal subunit protein uL15 (150 aa).

This sequence belongs to the universal ribosomal protein uL15 family. Part of the 50S ribosomal subunit.

Binds to the 23S rRNA. In Rickettsia prowazekii (strain Madrid E), this protein is Large ribosomal subunit protein uL15.